A 449-amino-acid polypeptide reads, in one-letter code: Required for meiotic nuclear division protein 1 homolog (449 aa).

The transit peptide at 1–16 (MPATLLRAVAGSHRVL) directs the protein to the mitochondrion.

It belongs to the RMD1/sif2 family. As to quaternary structure, homooligomer.

Its subcellular location is the mitochondrion. In terms of biological role, required for mitochondrial translation, possibly by coordinating the assembly or maintenance of the mitochondrial ribosome. The protein is Required for meiotic nuclear division protein 1 homolog (RMND1) of Pongo abelii (Sumatran orangutan).